Consider the following 542-residue polypeptide: Probable quinate permease (542 aa).

Over 1–22 (MSILALVEDRPTPKEVYNWKIY) the chain is Cytoplasmic. A helical transmembrane segment spans residues 23 to 43 (LLAAVASFTSCMIGYDSAFIG). Residues 44 to 74 (TTLALSSFREEFGFSTMSKTAVNLVSANIVS) are Extracellular-facing. The chain crosses the membrane as a helical span at residues 75–95 (CYQAGAFFGAFFAYPIGHFWG). Over 96–97 (RK) the chain is Cytoplasmic. The helical transmembrane segment at 98–118 (WGLLFAGTIFTLGAGLMLGAN) threads the bilayer. The Extracellular portion of the chain corresponds to 119-130 (GDRGLGLLYGGR). Residues 131–151 (VLAGLGVGAGSNITPIYISEM) form a helical membrane-spanning segment. Residues 152–159 (APPSIRGR) are Cytoplasmic-facing. Residues 160–180 (LVGVYELGWQIGGLVGFWINY) traverse the membrane as a helical segment. At 181-193 (GVSETLAPSHKQW) the chain is on the extracellular side. A helical transmembrane segment spans residues 194 to 214 (IIPFAVQLIPSGLLLIGAVFL). Topologically, residues 215 to 285 (KESPRWLFSR…AGTNKKVMYR (71 aa)) are cytoplasmic. A helical membrane pass occupies residues 286 to 306 (LFLGSMLFFWQNGSGINAINY). At 307–325 (YSPTVFKSIGLHGANTSMF) the chain is on the extracellular side. A helical transmembrane segment spans residues 326–346 (STGIFGVVKTVVTFVWLLYLI). Topologically, residues 347-352 (DRVGRR) are cytoplasmic. A helical membrane pass occupies residues 353-373 (LLLLIGAAGAAVCLLIVGAYI). Over 374–387 (KIADPASNPTQEMT) the chain is Extracellular. A helical membrane pass occupies residues 388 to 408 (GGGIAAMFFFYLYTVFYTPSW). At 409-456 (NGTPWVMNSEMFEPNMRSLAQACAAASNWLWNFLISRFTPQMFAKMEY) the chain is on the cytoplasmic side. A helical transmembrane segment spans residues 457–477 (GVWFFFASLMLLSIVFVFFLV). Over 478–542 (PETKGIPLES…EHVSEDLPKV (65 aa)) the chain is Extracellular. A disordered region spans residues 523-542 (GYSKTGEQQVEHVSEDLPKV). Basic and acidic residues predominate over residues 531–542 (QVEHVSEDLPKV).

Belongs to the major facilitator superfamily. Sugar transporter (TC 2.A.1.1) family. In terms of assembly, interacts with creB. In terms of processing, ubiquitinated. Deubiquitinated by creB, probably to control its activity or amount.

It localises to the cell membrane. In terms of biological role, integral membrane transporter that imports quinic acid to be catabolized as a carbon source. The polypeptide is Probable quinate permease (qutD) (Aspergillus fumigatus (strain ATCC MYA-4609 / CBS 101355 / FGSC A1100 / Af293) (Neosartorya fumigata)).